A 313-amino-acid chain; its full sequence is Acetaldehyde dehydrogenase 1 (313 aa).

Ser16–Ile19 is a binding site for NAD(+). The active-site Acyl-thioester intermediate is the Cys131. NAD(+) contacts are provided by residues Ser162–Asn170 and Asn281.

It belongs to the acetaldehyde dehydrogenase family.

It catalyses the reaction acetaldehyde + NAD(+) + CoA = acetyl-CoA + NADH + H(+). This Mycobacterium sp. (strain JLS) protein is Acetaldehyde dehydrogenase 1.